A 363-amino-acid polypeptide reads, in one-letter code: Chorismate synthase (363 aa).

The disordered stretch occupies residues 36-58 (SESDIQGDLDRRRPGQSKITTPR). R47 contacts NADP(+). FMN contacts are provided by residues 124 to 126 (RSS), G286, 301 to 305 (KPTAT), and R327.

It belongs to the chorismate synthase family. As to quaternary structure, homotetramer. FMNH2 serves as cofactor.

It catalyses the reaction 5-O-(1-carboxyvinyl)-3-phosphoshikimate = chorismate + phosphate. It participates in metabolic intermediate biosynthesis; chorismate biosynthesis; chorismate from D-erythrose 4-phosphate and phosphoenolpyruvate: step 7/7. Functionally, catalyzes the anti-1,4-elimination of the C-3 phosphate and the C-6 proR hydrogen from 5-enolpyruvylshikimate-3-phosphate (EPSP) to yield chorismate, which is the branch point compound that serves as the starting substrate for the three terminal pathways of aromatic amino acid biosynthesis. This reaction introduces a second double bond into the aromatic ring system. The polypeptide is Chorismate synthase (Crocosphaera subtropica (strain ATCC 51142 / BH68) (Cyanothece sp. (strain ATCC 51142))).